The chain runs to 131 residues: Small ribosomal subunit protein uS12 (131 aa).

Asp-89 bears the 3-methylthioaspartic acid mark.

The protein belongs to the universal ribosomal protein uS12 family. Part of the 30S ribosomal subunit. Contacts proteins S8 and S17. May interact with IF1 in the 30S initiation complex.

Its function is as follows. With S4 and S5 plays an important role in translational accuracy. In terms of biological role, interacts with and stabilizes bases of the 16S rRNA that are involved in tRNA selection in the A site and with the mRNA backbone. Located at the interface of the 30S and 50S subunits, it traverses the body of the 30S subunit contacting proteins on the other side and probably holding the rRNA structure together. The combined cluster of proteins S8, S12 and S17 appears to hold together the shoulder and platform of the 30S subunit. This Campylobacter concisus (strain 13826) protein is Small ribosomal subunit protein uS12.